The chain runs to 559 residues: Amino-acid acetyltransferase, mitochondrial (559 aa).

Positions 162 to 188 are disordered; it reads RLGPKPGSEDPTSELDFTPPETHTLPP. Residues 362-538 enclose the N-acetyltransferase domain; the sequence is LPVQVFHSVS…GSAGLSYVED (177 aa).

It belongs to the acetyltransferase family.

Its subcellular location is the mitochondrion. The catalysed reaction is L-glutamate + acetyl-CoA = N-acetyl-L-glutamate + CoA + H(+). It functions in the pathway amino-acid biosynthesis; L-arginine biosynthesis; N(2)-acetyl-L-ornithine from L-glutamate: step 1/4. N-acetylglutamate synthase involved in arginine biosynthesis. This chain is Amino-acid acetyltransferase, mitochondrial (ARG2), found in Laccaria bicolor (strain S238N-H82 / ATCC MYA-4686) (Bicoloured deceiver).